Here is a 348-residue protein sequence, read N- to C-terminus: Propane 2-monooxygenase, reductase component (348 aa).

Residues 5–95 enclose the 2Fe-2S ferredoxin-type domain; it reads HKINFEPVDI…DCTIELLNFD (91 aa). Positions 39, 44, 47, and 79 each coordinate [2Fe-2S] cluster. The FAD-binding FR-type domain occupies 105 to 206; it reads IQDVRTEVLA…TGPYGSFTLK (102 aa).

The protein belongs to the bacterial ring-hydroxylating dioxygenase ferredoxin reductase family. In terms of assembly, the propane 2-monooxygenase multicomponent enzyme system is composed of an electron transfer component and a monooxygenase component interacting with the effector protein MimD. The electron transfer component is composed of a reductase (MimB), and the monooxygenase component is formed by a large subunit (MimA) and a small subunit (MimC). FAD serves as cofactor. The cofactor is [2Fe-2S] cluster.

In terms of biological role, reductase component of the propane 2-monooxygenase multicomponent enzyme system which is involved in the degradation of propane via the O2-dependent hydroxylation of propane. Reductase catalyzes the transfer of electrons from NADH or NADPH to monooxygenase. In Mycolicibacterium goodii (Mycobacterium goodii), this protein is Propane 2-monooxygenase, reductase component.